The sequence spans 165 residues: NADH-quinone oxidoreductase subunit I (165 aa).

2 4Fe-4S ferredoxin-type domains span residues 57-86 (RRYE…IESE) and 96-125 (TRYD…ETHI). The [4Fe-4S] cluster site is built by Cys-66, Cys-69, Cys-72, Cys-76, Cys-105, Cys-108, Cys-111, and Cys-115.

It belongs to the complex I 23 kDa subunit family. As to quaternary structure, NDH-1 is composed of 14 different subunits. Subunits NuoA, H, J, K, L, M, N constitute the membrane sector of the complex. It depends on [4Fe-4S] cluster as a cofactor.

The protein resides in the cell inner membrane. The enzyme catalyses a quinone + NADH + 5 H(+)(in) = a quinol + NAD(+) + 4 H(+)(out). NDH-1 shuttles electrons from NADH, via FMN and iron-sulfur (Fe-S) centers, to quinones in the respiratory chain. The immediate electron acceptor for the enzyme in this species is believed to be ubiquinone. Couples the redox reaction to proton translocation (for every two electrons transferred, four hydrogen ions are translocated across the cytoplasmic membrane), and thus conserves the redox energy in a proton gradient. This Methylibium petroleiphilum (strain ATCC BAA-1232 / LMG 22953 / PM1) protein is NADH-quinone oxidoreductase subunit I.